Here is a 527-residue protein sequence, read N- to C-terminus: BTB/POZ domain-containing protein At4g01160 (527 aa).

Positions 111–180 (NNNTSVLSVQ…MYSNSLSVTA (70 aa)) constitute a BTB domain. Residues 233–327 (VKPLTNAARQ…HMTTDRLKKI (95 aa)) enclose the BACK domain.

The protein operates within protein modification; protein ubiquitination. Functionally, may act as a substrate-specific adapter of an E3 ubiquitin-protein ligase complex (CUL3-RBX1-BTB) which mediates the ubiquitination and subsequent proteasomal degradation of target proteins. The chain is BTB/POZ domain-containing protein At4g01160 from Arabidopsis thaliana (Mouse-ear cress).